A 55-amino-acid polypeptide reads, in one-letter code: MAVQQNKPTRSKRGMRRSHDALTTATLSVDKASGETHLRHHITADGFYRGRKVIG.

A disordered region spans residues 1–28; it reads MAVQQNKPTRSKRGMRRSHDALTTATLS.

The protein belongs to the bacterial ribosomal protein bL32 family.

This chain is Large ribosomal subunit protein bL32, found in Serratia proteamaculans (strain 568).